Consider the following 357-residue polypeptide: Protein RecA (357 aa).

Residue 67–74 participates in ATP binding; that stretch reads GPESSGKT. The interval 332–357 is disordered; that stretch reads PSAMSSSSSDDENSEGNVDFETGEVF.

The protein belongs to the RecA family.

Its subcellular location is the cytoplasm. Functionally, can catalyze the hydrolysis of ATP in the presence of single-stranded DNA, the ATP-dependent uptake of single-stranded DNA by duplex DNA, and the ATP-dependent hybridization of homologous single-stranded DNAs. It interacts with LexA causing its activation and leading to its autocatalytic cleavage. The chain is Protein RecA from Shewanella sp. (strain ANA-3).